The chain runs to 306 residues: Acetyl-coenzyme A carboxylase carboxyl transferase subunit beta (306 aa).

Residues 27-296 (LWHKCPSCEA…PKFVAAPIEP (270 aa)) enclose the CoA carboxyltransferase N-terminal domain. Positions 31, 34, 50, and 53 each coordinate Zn(2+). The C4-type zinc finger occupies 31-53 (CPSCEAVLYRPELEKTLDVCPKC).

It belongs to the AccD/PCCB family. Acetyl-CoA carboxylase is a heterohexamer composed of biotin carboxyl carrier protein (AccB), biotin carboxylase (AccC) and two subunits each of ACCase subunit alpha (AccA) and ACCase subunit beta (AccD). Requires Zn(2+) as cofactor.

The protein resides in the cytoplasm. It catalyses the reaction N(6)-carboxybiotinyl-L-lysyl-[protein] + acetyl-CoA = N(6)-biotinyl-L-lysyl-[protein] + malonyl-CoA. The protein operates within lipid metabolism; malonyl-CoA biosynthesis; malonyl-CoA from acetyl-CoA: step 1/1. In terms of biological role, component of the acetyl coenzyme A carboxylase (ACC) complex. Biotin carboxylase (BC) catalyzes the carboxylation of biotin on its carrier protein (BCCP) and then the CO(2) group is transferred by the transcarboxylase to acetyl-CoA to form malonyl-CoA. The sequence is that of Acetyl-coenzyme A carboxylase carboxyl transferase subunit beta from Pseudomonas fluorescens (strain Pf0-1).